The primary structure comprises 253 residues: Ribosomal RNA small subunit methyltransferase J (253 aa).

S-adenosyl-L-methionine-binding positions include 101–102, 117–118, and Asp-169; these read RD and ER.

This sequence belongs to the methyltransferase superfamily. RsmJ family.

The protein resides in the cytoplasm. The enzyme catalyses guanosine(1516) in 16S rRNA + S-adenosyl-L-methionine = N(2)-methylguanosine(1516) in 16S rRNA + S-adenosyl-L-homocysteine + H(+). In terms of biological role, specifically methylates the guanosine in position 1516 of 16S rRNA. This is Ribosomal RNA small subunit methyltransferase J from Psychromonas ingrahamii (strain DSM 17664 / CCUG 51855 / 37).